Consider the following 311-residue polypeptide: Cytosolic Fe-S cluster assembly factor Nubp1 homolog (311 aa).

The interval 1–21 (MQAPPPEHCPGVESEDAGKGS) is disordered. Residues Cys9, Cys23, Cys26, and Cys32 each coordinate [4Fe-4S] cluster. Residue 63–70 (GKGGVGKS) coordinates ATP. 2 residues coordinate [4Fe-4S] cluster: Cys240 and Cys243.

It belongs to the Mrp/NBP35 ATP-binding proteins family. NUBP1/NBP35 subfamily. Heterotetramer of 2 Nubp1 and 2 Nubp2 chains. [4Fe-4S] cluster serves as cofactor.

The protein resides in the cytoplasm. In terms of biological role, component of the cytosolic iron-sulfur (Fe/S) protein assembly (CIA) machinery. Required for maturation of extramitochondrial Fe-S proteins. The Nubp1-Nubp2 heterotetramer forms a Fe-S scaffold complex, mediating the de novo assembly of an Fe-S cluster and its transfer to target apoproteins. The protein is Cytosolic Fe-S cluster assembly factor Nubp1 homolog of Drosophila sechellia (Fruit fly).